We begin with the raw amino-acid sequence, 91 residues long: UPF0213 protein NMA2126 (91 aa).

One can recognise a GIY-YIG domain in the interval 4-83 (SNWSLYLILC…AAQKRKLWEQ (80 aa)).

It belongs to the UPF0213 family.

The chain is UPF0213 protein NMA2126 from Neisseria meningitidis serogroup A / serotype 4A (strain DSM 15465 / Z2491).